We begin with the raw amino-acid sequence, 477 residues long: MENQNQVKRNLKQRHITMIALGGTIGTGLFLTSGATISQAGPWGAVLAYCFIGIMVYFVMTSLGEMATYLPTSGSFSDYGGRYVDPAFGFALGWNYWLNGAITIAVDLTTAGLITQFWFPHLPSWIFSGIATVLIFIINVMAVGAFGETEYWLSTIKVITIVLFLAIGLLTIFGVLGQGNVDVVANLTAGNHGFVGGISGFVGVLLIAGFSFQGTEMLGITAGESEDPGKTIPKAMNSIFWRILLFYIFSIIVIAAIINFKDPRLLNPSSTAVMSPFTIVFKNIGFAVAASVMNAVILTSVISSANSVMYASTRILYSLGQEKGAPKFFGRTAKNGIPFYALLATTIICFIAFLTGIFGTQIYLFLIDLSSLTGFLAWLGISVSHIRFRRAYIAQGKKLEDLPYKAKWFPFGPIVALLMTGAIAINLDPAMLFSEHWGEGLALYAAIPIFIVLYFGYKWKYNTKIIPLEEVDLSREK.

Helical transmembrane passes span 16–36 (ITMIALGGTIGTGLFLTSGAT), 40–60 (AGPWGAVLAYCFIGIMVYFVM), 86–106 (PAFGFALGWNYWLNGAITIAV), 126–146 (IFSGIATVLIFIINVMAVGAF), 156–176 (IKVITIVLFLAIGLLTIFGVL), 192–212 (HGFVGGISGFVGVLLIAGFSF), 238–258 (SIFWRILLFYIFSIIVIAAII), 284–304 (IGFAVAASVMNAVILTSVISS), 337–359 (IPFYALLATTIICFIAFLTGIFG), 364–386 (LFLIDLSSLTGFLAWLGISVSHI), 408–428 (WFPFGPIVALLMTGAIAINLD), and 437–457 (WGEGLALYAAIPIFIVLYFGY).

This sequence belongs to the amino acid-polyamine-organocation (APC) superfamily. Amino acid transporter (AAT) (TC 2.A.3.1) family.

The protein resides in the cell membrane. In terms of biological role, involved in histidine uptake. Has low affinity for arginine and lysine. Plays no significant role in the excretion of accumulated histidine. This chain is Histidine permease HisP, found in Lactococcus lactis subsp. cremoris (strain MG1363).